Reading from the N-terminus, the 202-residue chain is dTTP/UTP pyrophosphatase (202 aa).

The active-site Proton acceptor is the Asp71.

The protein belongs to the Maf family. YhdE subfamily. Requires a divalent metal cation as cofactor.

The protein localises to the cytoplasm. The catalysed reaction is dTTP + H2O = dTMP + diphosphate + H(+). It catalyses the reaction UTP + H2O = UMP + diphosphate + H(+). Its function is as follows. Nucleoside triphosphate pyrophosphatase that hydrolyzes dTTP and UTP. May have a dual role in cell division arrest and in preventing the incorporation of modified nucleotides into cellular nucleic acids. This chain is dTTP/UTP pyrophosphatase, found in Zymomonas mobilis subsp. mobilis (strain ATCC 31821 / ZM4 / CP4).